The following is a 250-amino-acid chain: Tail assembly protein GT (250 aa).

The protein belongs to the lambda-like tail assembly protein family. In terms of assembly, interacts (via C-terminus) with tail tube protein. Interacts (via N-terminus) with the tail assembly protein G and the tape measure protein.

The protein resides in the host cytoplasm. Functionally, promotes tail assembly by creating a scaffold for the tail tube proteins. Tail assembly proteins G and GT probably wrap the linear tape measure protein to create a tail assembly scaffold. This allows the polymerization of the tail tube protein, during which G and GT are released, therefore they are absent in the mature virion. The tail assembly protein GT is produced by a rare -1 ribosomal frameshift. The ratio of translated G/GT is about 20, and this ratio is important for proper tail assembly. The polypeptide is Tail assembly protein GT (Escherichia coli (Bacteriophage N15)).